The following is a 117-amino-acid chain: Prefoldin subunit beta (117 aa).

Belongs to the prefoldin subunit beta family. Heterohexamer of two alpha and four beta subunits.

It is found in the cytoplasm. Its function is as follows. Molecular chaperone capable of stabilizing a range of proteins. Seems to fulfill an ATP-independent, HSP70-like function in archaeal de novo protein folding. This Pyrococcus horikoshii (strain ATCC 700860 / DSM 12428 / JCM 9974 / NBRC 100139 / OT-3) protein is Prefoldin subunit beta (pfdB).